The sequence spans 311 residues: Olfactory receptor 10G4 (311 aa).

The Extracellular segment spans residues 1–23 (MSNASLVTAFILTGLPHAPGLDA). A glycan (N-linked (GlcNAc...) asparagine) is linked at N3. The helical transmembrane segment at 24–44 (LLFGIFLVVYVLTVLGNLLIL) threads the bilayer. At 45-52 (LVIRVDSH) the chain is on the cytoplasmic side. The helical transmembrane segment at 53-73 (LHTPMYYFLTNLSFIDMWFST) threads the bilayer. Over 74–98 (VTVPKMLMTLVSPSGRAISFHSCVA) the chain is Extracellular. Residues C96 and C188 are joined by a disulfide bond. A helical membrane pass occupies residues 99 to 119 (QLYFFHFLGSTECFLYTVMSY). Residues 120 to 138 (DRYLAISYPLRYTSMMSGS) are Cytoplasmic-facing. Residues 139–159 (RCALLATGTWLSGSLHSAVQT) traverse the membrane as a helical segment. Residues 160 to 196 (ILTFHLPYCGPNQIQHYFCDAPPILKLACADTSANVM) lie on the Extracellular side of the membrane. A helical transmembrane segment spans residues 197 to 216 (VIFVDIGIVASGCFVLIVLS). At 217-236 (YVSIVCSILRIRTSDGRRRA) the chain is on the cytoplasmic side. The helical transmembrane segment at 237–257 (FQTCASHCIVVLCFFVPCVVI) threads the bilayer. Over 258 to 268 (YLRPGSMDAMD) the chain is Extracellular. A helical transmembrane segment spans residues 269–289 (GVVAIFYTVLTPLLNPVVYTL). The Cytoplasmic segment spans residues 290-311 (RNKEVKKAVLKLRDKVAHPQRK).

It belongs to the G-protein coupled receptor 1 family.

It is found in the cell membrane. Its function is as follows. Odorant receptor. In Homo sapiens (Human), this protein is Olfactory receptor 10G4 (OR10G4).